A 264-amino-acid chain; its full sequence is 5'-nucleotidase SurE (264 aa).

A divalent metal cation is bound by residues aspartate 9, aspartate 10, serine 40, and asparagine 95.

The protein belongs to the SurE nucleotidase family. The cofactor is a divalent metal cation.

The protein resides in the cytoplasm. The catalysed reaction is a ribonucleoside 5'-phosphate + H2O = a ribonucleoside + phosphate. Its function is as follows. Nucleotidase that shows phosphatase activity on nucleoside 5'-monophosphates. The polypeptide is 5'-nucleotidase SurE (Helicobacter hepaticus (strain ATCC 51449 / 3B1)).